Reading from the N-terminus, the 157-residue chain is Cyclic pyranopterin monophosphate synthase (157 aa).

Substrate contacts are provided by residues 74-76 and 112-113; these read MCH and ME. D127 is a catalytic residue.

Belongs to the MoaC family. Homohexamer; trimer of dimers.

The enzyme catalyses (8S)-3',8-cyclo-7,8-dihydroguanosine 5'-triphosphate = cyclic pyranopterin phosphate + diphosphate. Its pathway is cofactor biosynthesis; molybdopterin biosynthesis. Functionally, catalyzes the conversion of (8S)-3',8-cyclo-7,8-dihydroguanosine 5'-triphosphate to cyclic pyranopterin monophosphate (cPMP). This Campylobacter jejuni subsp. jejuni serotype O:6 (strain 81116 / NCTC 11828) protein is Cyclic pyranopterin monophosphate synthase.